A 541-amino-acid chain; its full sequence is Protein wntless homolog (541 aa).

Residues 1-15 are Cytoplasmic-facing; that stretch reads MAGAIIENMGTKKLC. The chain crosses the membrane as a helical span at residues 16–36; it reads IVGGILLVFQIIAFLVGGLIA. Residues 37-232 lie on the Lumenal side of the membrane; it reads PGPTTAVSYM…GIHQNGGFTK (196 aa). The interval 101–232 is interaction with Wnt proteins; that stretch reads MEMSPWFQFM…GIHQNGGFTK (132 aa). The chain crosses the membrane as a helical span at residues 233 to 253; the sequence is VWFAMKTFLTPSIFIIMVWYW. Topologically, residues 254–268 are cytoplasmic; the sequence is RRITMMSRPPVLLEK. The helical transmembrane segment at 269-289 threads the bilayer; it reads VIFALGISMTFINIPVEWFSI. Residues 290 to 303 are Lumenal-facing; that stretch reads GFDWTWMLLFGDIR. A helical transmembrane segment spans residues 304–324; it reads QGIFYAMLLSFWIIFCGEHMM. The Cytoplasmic segment spans residues 325–331; sequence DQHERNH. A helical membrane pass occupies residues 332 to 352; it reads IAGYWKQVGPIAVGSFCLFIF. Residues 353–380 lie on the Lumenal side of the membrane; that stretch reads DMCERGVQLTNPFYSIWTTDIGTELAMA. Residues 381 to 401 form a helical membrane-spanning segment; sequence FIIVAGICLCLYFLFLCFMVF. The Cytoplasmic segment spans residues 402-431; that stretch reads QVFRNISGKQSSLPAMSKVRRLHYEGLIFR. Residues 432–452 traverse the membrane as a helical segment; sequence FKFLMLITLACAAMTVIFFIV. The Lumenal portion of the chain corresponds to 453–471; it reads SQVTEGHWKWGGVTVQVNS. Residues 472–492 traverse the membrane as a helical segment; it reads AFFTGIYGMWNLYVFALMFLY. The Cytoplasmic portion of the chain corresponds to 493-541; sequence APSHKNYGEDQSNGDLGVHSGEELQLTTTITHVDGPTEIYKLTRKEAQE.

The protein belongs to the wntless family. In terms of assembly, interacts with WNT3A. Interacts with WNT1, WNT3 and WNT5A.

The protein localises to the golgi apparatus membrane. It is found in the cytoplasmic vesicle membrane. It localises to the cell membrane. The protein resides in the endoplasmic reticulum membrane. Its subcellular location is the early endosome membrane. In terms of biological role, regulates Wnt proteins sorting and secretion in a feedback regulatory mechanism. This reciprocal interaction plays a key role in the regulation of expression, subcellular location, binding and organelle-specific association of Wnt proteins. Also plays an important role in establishment of the anterior-posterior body axis formation during development. This chain is Protein wntless homolog (WLS), found in Pongo abelii (Sumatran orangutan).